Consider the following 405-residue polypeptide: Acetate kinase (405 aa).

Asparagine 7 contacts Mg(2+). Lysine 14 lines the ATP pocket. Arginine 98 is a binding site for substrate. Aspartate 156 functions as the Proton donor/acceptor in the catalytic mechanism. ATP contacts are provided by residues 215-219, 290-292, and 338-342; these read HLGNG, DLR, and GVGEN. Glutamate 391 is a Mg(2+) binding site.

This sequence belongs to the acetokinase family. Homodimer. It depends on Mg(2+) as a cofactor. Mn(2+) is required as a cofactor.

It is found in the cytoplasm. It catalyses the reaction acetate + ATP = acetyl phosphate + ADP. It participates in metabolic intermediate biosynthesis; acetyl-CoA biosynthesis; acetyl-CoA from acetate: step 1/2. Catalyzes the formation of acetyl phosphate from acetate and ATP. Can also catalyze the reverse reaction. The polypeptide is Acetate kinase (Gloeobacter violaceus (strain ATCC 29082 / PCC 7421)).